The following is a 390-amino-acid chain: Cystathionine beta-lyase (390 aa).

Lys202 is modified (N6-(pyridoxal phosphate)lysine).

The protein belongs to the trans-sulfuration enzymes family. It depends on pyridoxal 5'-phosphate as a cofactor.

Its subcellular location is the cytoplasm. The protein resides in the nucleus. It catalyses the reaction L,L-cystathionine + H2O = L-homocysteine + pyruvate + NH4(+). The catalysed reaction is an S-substituted L-cysteine + H2O = a thiol + pyruvate + NH4(+). The protein operates within amino-acid biosynthesis; L-methionine biosynthesis via de novo pathway; L-homocysteine from L-cystathionine: step 1/1. This Schizosaccharomyces pombe (strain 972 / ATCC 24843) (Fission yeast) protein is Cystathionine beta-lyase (str3).